A 322-amino-acid polypeptide reads, in one-letter code: Triosephosphate isomerase, chloroplastic (322 aa).

The N-terminal 67 residues, 1-67, are a transit peptide targeting the chloroplast; sequence MAVVSTSLAS…RRCPRGVVAM (67 aa). The substrate site is built by Asn78 and Lys80. His162 (electrophile) is an active-site residue. Glu232 acts as the Proton acceptor in catalysis.

It belongs to the triosephosphate isomerase family. As to quaternary structure, homodimer.

The protein resides in the plastid. It localises to the chloroplast. The enzyme catalyses D-glyceraldehyde 3-phosphate = dihydroxyacetone phosphate. It functions in the pathway carbohydrate biosynthesis; Calvin cycle. This chain is Triosephosphate isomerase, chloroplastic (TPIP1), found in Spinacia oleracea (Spinach).